The chain runs to 438 residues: MEEIVVHGGQRLTGNVHIEGAKNAVLPILAASLLASSGQTHLSNVPVLSDVFTMNNVLKFLNTKIDFDEINKTIDIDASRQLSSEAPFQYVSKMRASIVVMGPLLARLGHAKVAMPGGCAIGSRPIDLHLKGLNALGAEIERHDGYVEATANQLHGAAIYLDFPSVGATQNIMMAATLADGITTMENVAREPEIVDLANYLNQMGAKVTGAGTETIRIEGVKAMHGCDHSIVQDRIEAGTFMVAAAVTQGNVLVEDAIAEHNKPLISKMREMGVTVTEEPAGIRVIGPEILKPTSVKTMPHPGFPTDMQPQMTILQLCAQGTSLLTETVFENRFMHLDELRRMNADFKVEGRSVIMYGPTDFNGAQVTATDLRAAAALVIAGLVSRGYTEVTNLKYLDRGYFNFHGKLAKLGAEIKRVDVPDGTVYALNPDFANEAAE.

22 to 23 provides a ligand contact to phosphoenolpyruvate; it reads KN. R95 lines the UDP-N-acetyl-alpha-D-glucosamine pocket. Catalysis depends on C119, which acts as the Proton donor. 2-(S-cysteinyl)pyruvic acid O-phosphothioketal is present on C119. Residues 124 to 128, D307, and V329 contribute to the UDP-N-acetyl-alpha-D-glucosamine site; that span reads RPIDL.

Belongs to the EPSP synthase family. MurA subfamily.

The protein resides in the cytoplasm. The catalysed reaction is phosphoenolpyruvate + UDP-N-acetyl-alpha-D-glucosamine = UDP-N-acetyl-3-O-(1-carboxyvinyl)-alpha-D-glucosamine + phosphate. The protein operates within cell wall biogenesis; peptidoglycan biosynthesis. Its function is as follows. Cell wall formation. Adds enolpyruvyl to UDP-N-acetylglucosamine. The sequence is that of UDP-N-acetylglucosamine 1-carboxyvinyltransferase 1 from Lactiplantibacillus plantarum (strain ATCC BAA-793 / NCIMB 8826 / WCFS1) (Lactobacillus plantarum).